Reading from the N-terminus, the 545-residue chain is Membrane protein insertase YidC (545 aa).

4 helical membrane passes run isoleucine 350–tyrosine 370, leucine 424–valine 444, alanine 461–leucine 481, and proline 498–valine 518.

The protein belongs to the OXA1/ALB3/YidC family. Type 1 subfamily. As to quaternary structure, interacts with the Sec translocase complex via SecD. Specifically interacts with transmembrane segments of nascent integral membrane proteins during membrane integration.

Its subcellular location is the cell inner membrane. Functionally, required for the insertion and/or proper folding and/or complex formation of integral membrane proteins into the membrane. Involved in integration of membrane proteins that insert both dependently and independently of the Sec translocase complex, as well as at least some lipoproteins. Aids folding of multispanning membrane proteins. The polypeptide is Membrane protein insertase YidC (Neisseria gonorrhoeae (strain NCCP11945)).